The chain runs to 51 residues: Large ribosomal subunit protein eL39 (51 aa).

This sequence belongs to the eukaryotic ribosomal protein eL39 family.

The protein is Large ribosomal subunit protein eL39 of Saccharolobus islandicus (strain Y.N.15.51 / Yellowstone #2) (Sulfolobus islandicus).